The following is a 318-amino-acid chain: MGMSDIMWLDVSWAWLVLTAVLLAAAVFYLYTLILSHLAKTTVRNKVVLITDSLSTVGNECAKLFHAGGARLILCGSNWEKLEALAEQLTSQSDPTLTFPPKLVELDFSDMESVPEVISEILECFCCLDVLVFNSSMKLKAPVHSLSLQMDRLLMDVNYFGPITLVKGFLPSLISRRSGHILLVNSIQGKLAMPFRTTYAASKHAVQAFFECLRAEVQEYGITVSTINHTFIKTSSSIPKDEITARSMKTDHRQTPLGVSPKDVATELLRTLSSKKKEILMARWVPKAALYVRSLFPNLFFAIMAARVSNTVAETPDD.

The N-terminal stretch at 1–32 (MGMSDIMWLDVSWAWLVLTAVLLAAAVFYLYT) is a signal peptide. Residue 49 to 73 (LITDSLSTVGNECAKLFHAGGARLI) participates in NAD(+) binding. A substrate-binding site is contributed by S186. The active-site Proton acceptor is the Y199.

Belongs to the short-chain dehydrogenases/reductases (SDR) family.

It localises to the secreted. Its function is as follows. Putative oxidoreductase. The sequence is that of Dehydrogenase/reductase SDR family member 7C-B (dhrs7cb) from Danio rerio (Zebrafish).